The chain runs to 394 residues: 8-amino-7-oxononanoate synthase (394 aa).

R21 is a substrate binding site. 112–113 (GY) contributes to the pyridoxal 5'-phosphate binding site. H137 is a substrate binding site. Pyridoxal 5'-phosphate is bound by residues S183, H211, and T239. The residue at position 242 (K242) is an N6-(pyridoxal phosphate)lysine. T358 contacts substrate.

The protein belongs to the class-II pyridoxal-phosphate-dependent aminotransferase family. BioF subfamily. Homodimer. Pyridoxal 5'-phosphate is required as a cofactor.

It carries out the reaction 6-carboxyhexanoyl-[ACP] + L-alanine + H(+) = (8S)-8-amino-7-oxononanoate + holo-[ACP] + CO2. The protein operates within cofactor biosynthesis; biotin biosynthesis. In terms of biological role, catalyzes the decarboxylative condensation of pimeloyl-[acyl-carrier protein] and L-alanine to produce 8-amino-7-oxononanoate (AON), [acyl-carrier protein], and carbon dioxide. This chain is 8-amino-7-oxononanoate synthase, found in Burkholderia thailandensis (strain ATCC 700388 / DSM 13276 / CCUG 48851 / CIP 106301 / E264).